The primary structure comprises 778 residues: Acyl-homoserine lactone acylase PvdQ (778 aa).

The first 25 residues, 1–25 (MTISRQFTGLTLAGLFLGLSLSAQA), serve as a signal peptide directing secretion. A propeptide spans 196–218 (IENNARAYQLADTRLQRFALDRG) (spacer peptide). Serine 219 serves as the catalytic Nucleophile.

Belongs to the peptidase S45 family. In terms of assembly, heterodimer of an alpha subunit and a beta subunit processed from the same precursor.

It localises to the periplasm. It catalyses the reaction an N-acyl-L-homoserine lactone + H2O = L-homoserine lactone + a carboxylate. Its function is as follows. Catalyzes the deacylation of acyl-homoserine lactone (AHL or acyl-HSL), releasing homoserine lactone (HSL) and the corresponding fatty acid. Possesses a specificity for the degradation of long-chain acyl-HSLs (side chains of 11 to 14 carbons in length). The polypeptide is Acyl-homoserine lactone acylase PvdQ (pvdQ) (Pseudomonas fluorescens (strain Pf0-1)).